The sequence spans 464 residues: Argininosuccinate lyase (464 aa).

The protein belongs to the lyase 1 family. Argininosuccinate lyase subfamily.

It is found in the cytoplasm. It carries out the reaction 2-(N(omega)-L-arginino)succinate = fumarate + L-arginine. Its pathway is amino-acid biosynthesis; L-arginine biosynthesis; L-arginine from L-ornithine and carbamoyl phosphate: step 3/3. The sequence is that of Argininosuccinate lyase from Janthinobacterium sp. (strain Marseille) (Minibacterium massiliensis).